The chain runs to 415 residues: Glutamyl-tRNA reductase (415 aa).

Substrate-binding positions include 49-52 (TCNR), Ser106, 111-113 (EPQ), and Gln117. Cys50 functions as the Nucleophile in the catalytic mechanism. 186-191 (GAGETI) provides a ligand contact to NADP(+).

It belongs to the glutamyl-tRNA reductase family. Homodimer.

It catalyses the reaction (S)-4-amino-5-oxopentanoate + tRNA(Glu) + NADP(+) = L-glutamyl-tRNA(Glu) + NADPH + H(+). It functions in the pathway porphyrin-containing compound metabolism; protoporphyrin-IX biosynthesis; 5-aminolevulinate from L-glutamyl-tRNA(Glu): step 1/2. Functionally, catalyzes the NADPH-dependent reduction of glutamyl-tRNA(Glu) to glutamate 1-semialdehyde (GSA). This is Glutamyl-tRNA reductase from Teredinibacter turnerae (strain ATCC 39867 / T7901).